A 396-amino-acid chain; its full sequence is Elongation factor Tu 2 (396 aa).

Residues 10–206 enclose the tr-type G domain; it reads KPHVNIGTIG…AVDSYIPTPQ (197 aa). The interval 19–26 is G1; the sequence is GHVDHGKT. 19–26 is a binding site for GTP; sequence GHVDHGKT. Thr26 lines the Mg(2+) pocket. The G2 stretch occupies residues 60–64; sequence GITIS. Positions 81–84 are G3; the sequence is DCPG. Residues 81-85 and 136-139 contribute to the GTP site; these read DCPGH and NKVD. The interval 136-139 is G4; that stretch reads NKVD. Positions 174 to 176 are G5; sequence SAL.

The protein belongs to the TRAFAC class translation factor GTPase superfamily. Classic translation factor GTPase family. EF-Tu/EF-1A subfamily. In terms of assembly, monomer.

It is found in the cytoplasm. The enzyme catalyses GTP + H2O = GDP + phosphate + H(+). Functionally, GTP hydrolase that promotes the GTP-dependent binding of aminoacyl-tRNA to the A-site of ribosomes during protein biosynthesis. This is Elongation factor Tu 2 from Myxococcus xanthus (strain DK1622).